The chain runs to 136 residues: uncharacterized protein (136 aa).

2 helical membrane-spanning segments follow: residues 25-47 and 78-97; these read ILKA…PHAF and ITGA…LLTA.

The protein localises to the cell membrane. This is an uncharacterized protein from Bacillus subtilis (strain 168).